A 166-amino-acid polypeptide reads, in one-letter code: Kelch repeat protein B10 (166 aa).

Kelch repeat units lie at residues 25–76 (TIFV…STFG) and 77–129 (MLYF…KLNN).

It belongs to the poxviruses Kelch family.

The sequence is that of Kelch repeat protein B10 from Oryctolagus cuniculus (Rabbit).